A 78-amino-acid polypeptide reads, in one-letter code: Small ribosomal subunit protein bS18 (78 aa).

Belongs to the bacterial ribosomal protein bS18 family. In terms of assembly, part of the 30S ribosomal subunit. Forms a tight heterodimer with protein bS6.

In terms of biological role, binds as a heterodimer with protein bS6 to the central domain of the 16S rRNA, where it helps stabilize the platform of the 30S subunit. This is Small ribosomal subunit protein bS18 from Lactobacillus delbrueckii subsp. bulgaricus (strain ATCC 11842 / DSM 20081 / BCRC 10696 / JCM 1002 / NBRC 13953 / NCIMB 11778 / NCTC 12712 / WDCM 00102 / Lb 14).